We begin with the raw amino-acid sequence, 338 residues long: Glyceraldehyde-3-phosphate dehydrogenase (338 aa).

NAD(+) is bound by residues 11–12 (TI) and Gly111. 140-142 (SCN) contacts D-glyceraldehyde 3-phosphate. Cys141 (nucleophile) is an active-site residue. Arg169 provides a ligand contact to NAD(+). 195–196 (HG) lines the D-glyceraldehyde 3-phosphate pocket. Gln302 contacts NAD(+).

It belongs to the glyceraldehyde-3-phosphate dehydrogenase family. In terms of assembly, homotetramer.

It is found in the cytoplasm. It catalyses the reaction D-glyceraldehyde 3-phosphate + phosphate + NADP(+) = (2R)-3-phospho-glyceroyl phosphate + NADPH + H(+). The catalysed reaction is D-glyceraldehyde 3-phosphate + phosphate + NAD(+) = (2R)-3-phospho-glyceroyl phosphate + NADH + H(+). It participates in carbohydrate degradation; glycolysis; pyruvate from D-glyceraldehyde 3-phosphate: step 1/5. The protein is Glyceraldehyde-3-phosphate dehydrogenase (gap) of Methanobacterium bryantii.